The chain runs to 357 residues: Phosphoribosylformylglycinamidine cyclo-ligase (357 aa).

This sequence belongs to the AIR synthase family.

Its subcellular location is the cytoplasm. It carries out the reaction 2-formamido-N(1)-(5-O-phospho-beta-D-ribosyl)acetamidine + ATP = 5-amino-1-(5-phospho-beta-D-ribosyl)imidazole + ADP + phosphate + H(+). The protein operates within purine metabolism; IMP biosynthesis via de novo pathway; 5-amino-1-(5-phospho-D-ribosyl)imidazole from N(2)-formyl-N(1)-(5-phospho-D-ribosyl)glycinamide: step 2/2. The protein is Phosphoribosylformylglycinamidine cyclo-ligase of Rhizobium johnstonii (strain DSM 114642 / LMG 32736 / 3841) (Rhizobium leguminosarum bv. viciae).